We begin with the raw amino-acid sequence, 395 residues long: Chalcone synthase 7 (395 aa).

Residue Cys169 is part of the active site.

The protein belongs to the thiolase-like superfamily. Chalcone/stilbene synthases family.

It carries out the reaction (E)-4-coumaroyl-CoA + 3 malonyl-CoA + 3 H(+) = 2',4,4',6'-tetrahydroxychalcone + 3 CO2 + 4 CoA. The protein operates within secondary metabolite biosynthesis; flavonoid biosynthesis. The primary product of this enzyme is 4,2',4',6'-tetrahydroxychalcone (also termed naringenin-chalcone or chalcone) which can under specific conditions spontaneously isomerize into naringenin. This is Chalcone synthase 7 (CSF7) from Picea mariana (Black spruce).